Here is a 249-residue protein sequence, read N- to C-terminus: tRNA (guanine-N(1)-)-methyltransferase (249 aa).

S-adenosyl-L-methionine contacts are provided by residues Gly113 and 133–138 (IGDFVL).

Belongs to the RNA methyltransferase TrmD family. As to quaternary structure, homodimer.

It is found in the cytoplasm. The catalysed reaction is guanosine(37) in tRNA + S-adenosyl-L-methionine = N(1)-methylguanosine(37) in tRNA + S-adenosyl-L-homocysteine + H(+). Functionally, specifically methylates guanosine-37 in various tRNAs. This Aliivibrio salmonicida (strain LFI1238) (Vibrio salmonicida (strain LFI1238)) protein is tRNA (guanine-N(1)-)-methyltransferase.